Reading from the N-terminus, the 389-residue chain is MSLTRKPLASHHRIVIKIGSALLVDRKSGLKKDWLDAICEDIAALKKNGADVQVVSSGAIALGRTVLGLPSGALKLEESQAAAAVGQIALARAWSESLSRHEIVAGQILLTLSDTEERRRYLNARATINQLLKIGAIPIINENDTVATTEIRYGDNDRLAARVATMTGADLLVLLSDIDGLYTAPPHLDPDAKFLETIADITPEIEAMAGGAASELSRGGMRTKIDAGKIATAAGCGMIIASGKTLNPLKAIENGARSSWFAPSGTPVTARKTWIAGQLQPAGEIHVDAGAEKALYAGKSLLPAGVRQVKGNFGRGDAIAIIGVEGREVARGLAGYDAEEARLIIGHKSNEIETILGYVGRAAMIHRDDLVMTGAAVKVKHAKKDEVHA.

Lys-17 is a binding site for ATP. Residues Ser-57, Asp-144, and Asn-156 each coordinate substrate. 176 to 177 serves as a coordination point for ATP; sequence SD. Positions 282–359 constitute a PUA domain; it reads AGEIHVDAGA…NEIETILGYV (78 aa).

This sequence belongs to the glutamate 5-kinase family.

Its subcellular location is the cytoplasm. The catalysed reaction is L-glutamate + ATP = L-glutamyl 5-phosphate + ADP. Its pathway is amino-acid biosynthesis; L-proline biosynthesis; L-glutamate 5-semialdehyde from L-glutamate: step 1/2. In terms of biological role, catalyzes the transfer of a phosphate group to glutamate to form L-glutamate 5-phosphate. The protein is Glutamate 5-kinase of Agrobacterium fabrum (strain C58 / ATCC 33970) (Agrobacterium tumefaciens (strain C58)).